Here is a 210-residue protein sequence, read N- to C-terminus: Large ribosomal subunit protein uL3 (210 aa).

Polar residues predominate over residues 131–140; sequence NRASHGNSLS. The disordered stretch occupies residues 131–150; that stretch reads NRASHGNSLSHRAPGSIGCR. Residue Gln-151 is modified to N5-methylglutamine.

This sequence belongs to the universal ribosomal protein uL3 family. As to quaternary structure, part of the 50S ribosomal subunit. Forms a cluster with proteins L14 and L19. In terms of processing, methylated by PrmB.

Functionally, one of the primary rRNA binding proteins, it binds directly near the 3'-end of the 23S rRNA, where it nucleates assembly of the 50S subunit. The protein is Large ribosomal subunit protein uL3 of Acidithiobacillus ferrooxidans (strain ATCC 23270 / DSM 14882 / CIP 104768 / NCIMB 8455) (Ferrobacillus ferrooxidans (strain ATCC 23270)).